A 176-amino-acid chain; its full sequence is ATP synthase subunit delta (176 aa).

Belongs to the ATPase delta chain family. F-type ATPases have 2 components, F(1) - the catalytic core - and F(0) - the membrane proton channel. F(1) has five subunits: alpha(3), beta(3), gamma(1), delta(1), epsilon(1). F(0) has three main subunits: a(1), b(2) and c(10-14). The alpha and beta chains form an alternating ring which encloses part of the gamma chain. F(1) is attached to F(0) by a central stalk formed by the gamma and epsilon chains, while a peripheral stalk is formed by the delta and b chains.

It localises to the cell inner membrane. F(1)F(0) ATP synthase produces ATP from ADP in the presence of a proton or sodium gradient. F-type ATPases consist of two structural domains, F(1) containing the extramembraneous catalytic core and F(0) containing the membrane proton channel, linked together by a central stalk and a peripheral stalk. During catalysis, ATP synthesis in the catalytic domain of F(1) is coupled via a rotary mechanism of the central stalk subunits to proton translocation. In terms of biological role, this protein is part of the stalk that links CF(0) to CF(1). It either transmits conformational changes from CF(0) to CF(1) or is implicated in proton conduction. In Campylobacter hominis (strain ATCC BAA-381 / DSM 21671 / CCUG 45161 / LMG 19568 / NCTC 13146 / CH001A), this protein is ATP synthase subunit delta.